The sequence spans 494 residues: MTNWQQQLPLTDTQKNELDKSVLRYLNWNYKQTVRHEHAQDYESVRHAIVTLSGFLLQESVDRQEFISNNDTSNESMVDIDELLLPKKWNSIVRLQKKIIELEQNTETLVSQIKDLNTQVSELAQFKPTTSNGTSAHNVLKWIPRNLPSCLINVESSVTSVKLHPNLPIVFVATDHGKLYAFDLFNYTIPLASLQSHTKAITSMDVLFTNFTNSSKKNYLVVVTASKDLQIHVFKWVSEECKFQQIRSLLGHEHIVSAVKIWQKNNDVHIASCSRDQTVKIWDFHNGWSLKTFQPHSQWVRSIDVLGDYIISGSHDTTLRLTHWPSGNGLSVGTGHEFPIEKVKFIHFIEDSPEIRFRTPSTDRYKNWGMQYCVSASRDRTIKIWEIPLPTLMAHRAPIPNPTDSNFRCVLTLKGHLSWVRDISIRGQYLFSCADDKSVRCWDLNTGQCLHVWEKLHTGFVNSLDLDVDFDSNVTPRQMMVTGGLDCKSNVFMR.

The LisH domain occupies 14–46; sequence QKNELDKSVLRYLNWNYKQTVRHEHAQDYESVR. A coiled-coil region spans residues 90-123; sequence NSIVRLQKKIIELEQNTETLVSQIKDLNTQVSEL. WD repeat units lie at residues 153 to 192, 196 to 244, 251 to 292, 295 to 334, 347 to 395, 415 to 454, and 457 to 492; these read NVES…IPLA, SHTK…CKFQ, GHEH…SLKT, PHSQ…SVGT, HFIE…LMAH, GHLS…HVWE, and HTGF…SNVF.

It belongs to the WD repeat LIS1/nudF family. Self-associates. Interacts with NDL1 and dynein.

Its subcellular location is the cytoplasm. The protein localises to the cytoskeleton. It localises to the spindle pole. Functionally, positively regulates the activity of the minus-end directed microtubule motor protein dynein. Plays a central role in positioning the mitotic spindle at the bud neck during cell division. Targets cytoplasmic dynein to microtubule plus ends, thereby promoting dynein-mediated microtubule sliding along the bud cortex and consequently the movement of the mitotic spindle to the bud neck. This is Nuclear distribution protein PAC1 from Saccharomyces cerevisiae (strain JAY291) (Baker's yeast).